The sequence spans 244 residues: 7-cyano-7-deazaguanine synthase (244 aa).

14-24 (FSGGQDSATCL) lines the ATP pocket. Zn(2+)-binding residues include cysteine 202, cysteine 217, cysteine 220, and cysteine 223.

This sequence belongs to the QueC family. It depends on Zn(2+) as a cofactor.

The catalysed reaction is 7-carboxy-7-deazaguanine + NH4(+) + ATP = 7-cyano-7-deazaguanine + ADP + phosphate + H2O + H(+). Its pathway is purine metabolism; 7-cyano-7-deazaguanine biosynthesis. In terms of biological role, catalyzes the ATP-dependent conversion of 7-carboxy-7-deazaguanine (CDG) to 7-cyano-7-deazaguanine (preQ(0)). In Paraburkholderia phytofirmans (strain DSM 17436 / LMG 22146 / PsJN) (Burkholderia phytofirmans), this protein is 7-cyano-7-deazaguanine synthase.